The primary structure comprises 248 residues: tRNA pseudouridine synthase A (248 aa).

Asp55 serves as the catalytic Nucleophile. Residue Tyr114 coordinates substrate.

The protein belongs to the tRNA pseudouridine synthase TruA family. As to quaternary structure, homodimer.

It carries out the reaction uridine(38/39/40) in tRNA = pseudouridine(38/39/40) in tRNA. Formation of pseudouridine at positions 38, 39 and 40 in the anticodon stem and loop of transfer RNAs. The polypeptide is tRNA pseudouridine synthase A (Rhodopseudomonas palustris (strain ATCC BAA-98 / CGA009)).